Reading from the N-terminus, the 255-residue chain is Cyclic di-GMP phosphodiesterase PdeH (255 aa).

In terms of domain architecture, EAL spans 13 to 255; that stretch reads EASIESLQER…ETLNTAVLAL (243 aa).

It catalyses the reaction 3',3'-c-di-GMP + H2O = 5'-phosphoguanylyl(3'-&gt;5')guanosine + H(+). Its function is as follows. Involved in the control of the switch from cell motility to adhesion via regulation of cellular levels of cyclic-di-GMP (c-di-GMP). Part of a signaling cascade that regulates curli biosynthesis. The cascade is composed of two c-di-GMP control modules, in which c-di-GMP controlled by the DgcE/PdeH pair (module I) regulates the activity of the DgcM/PdeR pair (module II), which in turn regulates activity of the transcription factor MlrA and expression of the master biofilm regulator csgD. Effect on flagella is controlled via the c-di-GMP-binding flagellar brake protein YcgR. This chain is Cyclic di-GMP phosphodiesterase PdeH, found in Escherichia coli (strain K12).